The chain runs to 181 residues: Cytochrome b6-f complex iron-sulfur subunit (181 aa).

The segment at 1–35 (MAQTGNFKSPARMSSLGQGAAPASSGAVTGGKPRE) is disordered. The next 2 membrane-spanning stretches (helical) occupy residues 53 to 73 (VGGV…KYII) and 114 to 134 (GGAL…VNWV). Residues 85-178 (LTVGKASEVP…ARIEGDSIII (94 aa)) enclose the Rieske domain. Positions 124, 126, 142, and 145 each coordinate [2Fe-2S] cluster. Cysteine 129 and cysteine 144 are oxidised to a cystine.

Belongs to the Rieske iron-sulfur protein family. [2Fe-2S] cluster is required as a cofactor.

The protein localises to the cell inner membrane. It carries out the reaction 2 oxidized [plastocyanin] + a plastoquinol + 2 H(+)(in) = 2 reduced [plastocyanin] + a plastoquinone + 4 H(+)(out). In terms of biological role, component of the green S-bacteria bc-complex which consists of the Rieske protein and cytochrome b subunit and which appears to lack a cytochrome c1-equivalent. This complex has a comparatively low redox potential. This chain is Cytochrome b6-f complex iron-sulfur subunit (petC), found in Chlorobaculum thiosulfatiphilum (Chlorobium limicola f.sp. thiosulfatophilum).